The following is a 263-amino-acid chain: 3-methyl-2-oxobutanoate hydroxymethyltransferase (263 aa).

Mg(2+) contacts are provided by Asp45 and Asp84. Residues 45-46 (DS), Asp84, and Lys112 each bind 3-methyl-2-oxobutanoate. Glu114 contributes to the Mg(2+) binding site. Glu180 serves as the catalytic Proton acceptor.

Belongs to the PanB family. In terms of assembly, homodecamer; pentamer of dimers. The cofactor is Mg(2+).

Its subcellular location is the cytoplasm. The catalysed reaction is 3-methyl-2-oxobutanoate + (6R)-5,10-methylene-5,6,7,8-tetrahydrofolate + H2O = 2-dehydropantoate + (6S)-5,6,7,8-tetrahydrofolate. It participates in cofactor biosynthesis; (R)-pantothenate biosynthesis; (R)-pantoate from 3-methyl-2-oxobutanoate: step 1/2. Its function is as follows. Catalyzes the reversible reaction in which hydroxymethyl group from 5,10-methylenetetrahydrofolate is transferred onto alpha-ketoisovalerate to form ketopantoate. This Salmonella paratyphi C (strain RKS4594) protein is 3-methyl-2-oxobutanoate hydroxymethyltransferase.